The primary structure comprises 290 residues: Light-independent protochlorophyllide reductase iron-sulfur ATP-binding protein (290 aa).

ATP is bound by residues 10-15 (GIGKST) and K39. S14 is a Mg(2+) binding site. 2 residues coordinate [4Fe-4S] cluster: C95 and C129. 180–181 (NR) contributes to the ATP binding site.

This sequence belongs to the NifH/BchL/ChlL family. Homodimer. Protochlorophyllide reductase is composed of three subunits; ChlL, ChlN and ChlB. [4Fe-4S] cluster serves as cofactor.

The protein resides in the plastid. It localises to the chloroplast. It carries out the reaction chlorophyllide a + oxidized 2[4Fe-4S]-[ferredoxin] + 2 ADP + 2 phosphate = protochlorophyllide a + reduced 2[4Fe-4S]-[ferredoxin] + 2 ATP + 2 H2O. The protein operates within porphyrin-containing compound metabolism; chlorophyll biosynthesis (light-independent). Functionally, component of the dark-operative protochlorophyllide reductase (DPOR) that uses Mg-ATP and reduced ferredoxin to reduce ring D of protochlorophyllide (Pchlide) to form chlorophyllide a (Chlide). This reaction is light-independent. The L component serves as a unique electron donor to the NB-component of the complex, and binds Mg-ATP. The chain is Light-independent protochlorophyllide reductase iron-sulfur ATP-binding protein from Anthoceros angustus (Hornwort).